A 54-amino-acid polypeptide reads, in one-letter code: IAIVDCSDYPKPVCSLEYMPLCGSDSKTYSNKCDFCNAFVDSNGTLSLSHFGKC.

Residues 4-54 (VDCSDYPKPVCSLEYMPLCGSDSKTYSNKCDFCNAFVDSNGTLSLSHFGKC) enclose the Kazal-like domain. Intrachain disulfides connect Cys-6–Cys-36, Cys-14–Cys-33, and Cys-22–Cys-54. Asn-43 is a glycosylation site (N-linked (GlcNAc...) asparagine).

The protein resides in the secreted. This Circus aeruginosus (Western marsh harrier) protein is Ovomucoid.